Here is a 200-residue protein sequence, read N- to C-terminus: MRTSGLLEQLMESLRCLPGVGPKSAQRMAFHLLQRNRQGGMQLADALSQAMSEIGHCSECRTFTEEDTCAICLNPKRQASGEMCIVESPADIVAVEATGQFSGRYFVLMGHLSPLDGIGPSDIGLDLLDHRLNRGDIKEVILATNPTVEGEATAHYIAELCQEHQVPASRIAHGVPMGGELELVDGTTLSHSILGRQKLY.

The C4-type zinc-finger motif lies at 57 to 72; sequence CSECRTFTEEDTCAIC. The 96-residue stretch at 81–176 folds into the Toprim domain; that stretch reads GEMCIVESPA…PASRIAHGVP (96 aa).

It belongs to the RecR family.

Its function is as follows. May play a role in DNA repair. It seems to be involved in an RecBC-independent recombinational process of DNA repair. It may act with RecF and RecO. The chain is Recombination protein RecR from Aliivibrio fischeri (strain ATCC 700601 / ES114) (Vibrio fischeri).